A 384-amino-acid chain; its full sequence is tRNA-specific 2-thiouridylase MnmA (384 aa).

ATP is bound by residues Gly-9 to Ser-16 and Met-35. Residues Asn-95–Asp-97 form an interaction with target base in tRNA region. Residue Cys-100 is the Nucleophile of the active site. An intrachain disulfide couples Cys-100 to Cys-196. Gly-124 lines the ATP pocket. The interval Lys-146–Gln-148 is interaction with tRNA. Cys-196 serves as the catalytic Cysteine persulfide intermediate. The interaction with tRNA stretch occupies residues Arg-308–Tyr-309.

It belongs to the MnmA/TRMU family.

It localises to the cytoplasm. It catalyses the reaction S-sulfanyl-L-cysteinyl-[protein] + uridine(34) in tRNA + AH2 + ATP = 2-thiouridine(34) in tRNA + L-cysteinyl-[protein] + A + AMP + diphosphate + H(+). Catalyzes the 2-thiolation of uridine at the wobble position (U34) of tRNA, leading to the formation of s(2)U34. In Burkholderia vietnamiensis (strain G4 / LMG 22486) (Burkholderia cepacia (strain R1808)), this protein is tRNA-specific 2-thiouridylase MnmA.